Consider the following 91-residue polypeptide: Long neurotoxin OH-56 (91 aa).

The first 21 residues, 1-21, serve as a signal peptide directing secretion; that stretch reads MKTLLLTLVVVTIMCLDLGYT. 5 disulfide bridges follow: C24–C42, C35–C63, C48–C52, C67–C78, and C79–C84.

Belongs to the three-finger toxin family. Long-chain subfamily. Type II alpha-neurotoxin sub-subfamily. In terms of tissue distribution, expressed by the venom gland.

The protein localises to the secreted. Its function is as follows. Binds with high affinity to muscular (alpha-1/CHRNA1) and neuronal (alpha-7/CHRNA7) nicotinic acetylcholine receptor (nAChR) and inhibits acetylcholine from binding to the receptor, thereby impairing neuromuscular and neuronal transmission. This Ophiophagus hannah (King cobra) protein is Long neurotoxin OH-56.